A 393-amino-acid polypeptide reads, in one-letter code: S-adenosylmethionine synthase (393 aa).

Glu9 serves as a coordination point for Mg(2+). An ATP-binding site is contributed by His15. K(+) is bound at residue Glu43. L-methionine is bound by residues Glu56 and Gln99. ATP contacts are provided by residues 167–169 (DGK), 235–238 (SGRF), Asp246, 252–253 (RK), Ala269, Lys273, and Lys277. Asp246 is an L-methionine binding site. L-methionine is bound at residue Lys277.

It belongs to the AdoMet synthase family. Homotetramer. Mn(2+) serves as cofactor. Requires Mg(2+) as cofactor. The cofactor is Co(2+). It depends on K(+) as a cofactor.

It is found in the cytoplasm. It carries out the reaction L-methionine + ATP + H2O = S-adenosyl-L-methionine + phosphate + diphosphate. It functions in the pathway amino-acid biosynthesis; S-adenosyl-L-methionine biosynthesis; S-adenosyl-L-methionine from L-methionine: step 1/1. In terms of biological role, catalyzes the formation of S-adenosylmethionine from methionine and ATP. The reaction comprises two steps that are both catalyzed by the same enzyme: formation of S-adenosylmethionine (AdoMet) and triphosphate, and subsequent hydrolysis of the triphosphate. The sequence is that of S-adenosylmethionine synthase (SAMS) from Litchi chinensis (Lychee).